We begin with the raw amino-acid sequence, 138 residues long: Small ribosomal subunit protein uS11c (138 aa).

The interval 1 to 23 is disordered; that stretch reads MAKPIPRIGSRRNGRIGSRKSAR. The span at 9-23 shows a compositional bias: basic residues; it reads GSRRNGRIGSRKSAR.

The protein belongs to the universal ribosomal protein uS11 family. Part of the 30S ribosomal subunit.

It is found in the plastid. The protein resides in the chloroplast. The sequence is that of Small ribosomal subunit protein uS11c from Vitis vinifera (Grape).